Consider the following 660-residue polypeptide: ATPase WRNIP1 (660 aa).

The UBZ4-type zinc finger occupies 17-44 (QVQCPVCQQMMPAAHINSHLDRCLLLHP). Zn(2+) is bound by residues cysteine 20, cysteine 23, histidine 31, histidine 35, and cysteine 39. Residues 50-191 (PAAGPHRAGE…DDPGHWDADA (142 aa)) are disordered. Residues serine 65 and serine 75 each carry the phosphoserine modification. Residues 76 to 89 (ESSALKQPATPTAA) are compositionally biased toward polar residues. Residue lysine 81 forms a Glycyl lysine isopeptide (Lys-Gly) (interchain with G-Cter in ubiquitin) linkage. Threonine 85 is subject to Phosphothreonine. Residues serine 91 and serine 92 each carry the phosphoserine modification. A compositionally biased stretch (acidic residues) spans 92 to 104 (SEGEGEEGDDGGE). The residue at position 116 (threonine 116) is a Phosphothreonine. Residues 135–155 (ARKGLGKRPAAAAAAGSASPR) show a composition bias toward low complexity. A Glycyl lysine isopeptide (Lys-Gly) (interchain with G-Cter in ubiquitin) cross-link involves residue lysine 141. A Phosphoserine modification is found at serine 153. Acidic residues predominate over residues 159 to 182 (ETEAQEEEEAGVDGDGDADVDGED). Residue lysine 220 forms a Glycyl lysine isopeptide (Lys-Gly) (interchain with G-Cter in ubiquitin) linkage. 265–271 (PGCGKTT) provides a ligand contact to ATP. Glycyl lysine isopeptide (Lys-Gly) (interchain with G-Cter in ubiquitin) cross-links involve residues lysine 296, lysine 305, lysine 311, lysine 317, and lysine 330. A Glycyl lysine isopeptide (Lys-Gly) (interchain with G-Cter in SUMO2); alternate cross-link involves residue lysine 477. Lysine 477 participates in a covalent cross-link: Glycyl lysine isopeptide (Lys-Gly) (interchain with G-Cter in ubiquitin); alternate. A phosphotyrosine mark is found at tyrosine 529 and tyrosine 557. Lysine 622 participates in a covalent cross-link: Glycyl lysine isopeptide (Lys-Gly) (interchain with G-Cter in ubiquitin). A Glycyl lysine isopeptide (Lys-Gly) (interchain with G-Cter in ubiquitin); alternate cross-link involves residue lysine 628. Position 628 is an N6-acetyllysine; alternate (lysine 628). Lysine 631 is covalently cross-linked (Glycyl lysine isopeptide (Lys-Gly) (interchain with G-Cter in ubiquitin)).

Belongs to the AAA ATPase family. RarA/MGS1/WRNIP1 subfamily. Forms homooligomers, possibly octamers. Directly interacts with POLD1, POLD2 and POLD4. Interacts with the N-terminal domain of WRN. Interacts (via UBZ4-type zinc finger) with monoubiquitin and polyubiquitin. Interacts with TRIM14 and PPP6C; these interactions positively regulate the RIGI signaling pathway. Sumoylated with SUMO1 and SUMO2/3. Ubiquitously expressed.

The protein localises to the nucleus. Its subcellular location is the cytoplasm. It carries out the reaction ATP + H2O = ADP + phosphate + H(+). Functions as a modulator of initiation or reinitiation events during DNA polymerase delta-mediated DNA synthesis. In the presence of ATP, stimulation of DNA polymerase delta-mediated DNA synthesis is decreased. Also plays a role in the innate immune defense against viruses. Stabilizes the RIGI dsRNA interaction and promotes RIGI 'Lys-63'-linked polyubiquitination. In turn, RIGI transmits the signal through mitochondrial MAVS. The polypeptide is ATPase WRNIP1 (Rattus norvegicus (Rat)).